The chain runs to 447 residues: UDP-glycosyltransferase 79B10 (447 aa).

Residues S260, 319-321, 336-344, and 358-361 each bind UDP-alpha-D-glucose; these read VQQ, HCGFGSMWE, and LADQ.

This sequence belongs to the UDP-glycosyltransferase family.

The chain is UDP-glycosyltransferase 79B10 (UGT79B10) from Arabidopsis thaliana (Mouse-ear cress).